The following is a 614-amino-acid chain: Acetylcholinesterase (614 aa).

The signal sequence occupies residues 1–31; that stretch reads MRPPWYPLHTPSLASPLLFLLLSLLGGGARA. C100 and C127 are joined by a disulfide. The active-site Acyl-ester intermediate is the S234. A disulfide bond links C288 and C303. N296 carries an N-linked (GlcNAc...) asparagine glycan. Catalysis depends on E365, which acts as the Charge relay system. N-linked (GlcNAc...) asparagine glycosylation occurs at N381. C440 and C560 are disulfide-bonded. The active-site Charge relay system is the H478. The N-linked (GlcNAc...) asparagine glycan is linked to N495.

It belongs to the type-B carboxylesterase/lipase family. In terms of assembly, homotetramer; composed of disulfide-linked homodimers. Catalytic forms H (GPI-anchor dimer) and T (asymmetric collagen-tailed), which differ in their C-terminus, account for all types of known ACHE forms. Interacts with PRIMA1. The interaction with PRIMA1 is required to anchor it to the basal lamina of cells and organize into tetramers. As to expression, has been found in central nervous system and muscle. Found in embryonic liver and spleen but not in adult liver.

The protein localises to the synapse. The protein resides in the secreted. It localises to the cell membrane. It carries out the reaction acetylcholine + H2O = choline + acetate + H(+). In terms of biological role, terminates signal transduction at the neuromuscular junction by rapid hydrolysis of the acetylcholine released into the synaptic cleft. This is Acetylcholinesterase (Ache) from Rattus norvegicus (Rat).